Reading from the N-terminus, the 158-residue chain is NAD(P)H-quinone oxidoreductase subunit J, chloroplastic (158 aa).

This sequence belongs to the complex I 30 kDa subunit family. As to quaternary structure, NDH is composed of at least 16 different subunits, 5 of which are encoded in the nucleus.

Its subcellular location is the plastid. It is found in the chloroplast thylakoid membrane. The catalysed reaction is a plastoquinone + NADH + (n+1) H(+)(in) = a plastoquinol + NAD(+) + n H(+)(out). It carries out the reaction a plastoquinone + NADPH + (n+1) H(+)(in) = a plastoquinol + NADP(+) + n H(+)(out). Functionally, NDH shuttles electrons from NAD(P)H:plastoquinone, via FMN and iron-sulfur (Fe-S) centers, to quinones in the photosynthetic chain and possibly in a chloroplast respiratory chain. The immediate electron acceptor for the enzyme in this species is believed to be plastoquinone. Couples the redox reaction to proton translocation, and thus conserves the redox energy in a proton gradient. This chain is NAD(P)H-quinone oxidoreductase subunit J, chloroplastic, found in Guizotia abyssinica (Niger).